The primary structure comprises 115 residues: Large ribosomal subunit protein bL19 (115 aa).

This sequence belongs to the bacterial ribosomal protein bL19 family.

In terms of biological role, this protein is located at the 30S-50S ribosomal subunit interface and may play a role in the structure and function of the aminoacyl-tRNA binding site. The chain is Large ribosomal subunit protein bL19 from Clostridium kluyveri (strain ATCC 8527 / DSM 555 / NBRC 12016 / NCIMB 10680 / K1).